The following is a 120-amino-acid chain: Cell cycle protein GpsB (120 aa).

A coiled-coil region spans residues 32–68; that stretch reads LDDIIKDYETYAALVKELREENRRLKEELAAKPVEKA. The disordered stretch occupies residues 63–88; sequence KPVEKAPVQPTQPVQSTQATQSTVES. Over residues 68-86 the composition is skewed to low complexity; sequence APVQPTQPVQSTQATQSTV.

Belongs to the GpsB family. In terms of assembly, forms polymers through the coiled coil domains. Interacts with PBP1, MreC and EzrA.

The protein resides in the cytoplasm. Its function is as follows. Divisome component that associates with the complex late in its assembly, after the Z-ring is formed, and is dependent on DivIC and PBP2B for its recruitment to the divisome. Together with EzrA, is a key component of the system that regulates PBP1 localization during cell cycle progression. Its main role could be the removal of PBP1 from the cell pole after pole maturation is completed. Also contributes to the recruitment of PBP1 to the division complex. Not essential for septum formation. This is Cell cycle protein GpsB from Streptococcus sanguinis (strain SK36).